The chain runs to 148 residues: Large ribosomal subunit protein bL9 (148 aa).

Belongs to the bacterial ribosomal protein bL9 family.

In terms of biological role, binds to the 23S rRNA. The sequence is that of Large ribosomal subunit protein bL9 from Clostridium perfringens (strain ATCC 13124 / DSM 756 / JCM 1290 / NCIMB 6125 / NCTC 8237 / Type A).